Reading from the N-terminus, the 493-residue chain is Glycerol kinase (493 aa).

Thr13 is an ADP binding site. Thr13, Thr14, and Ser15 together coordinate ATP. A sn-glycerol 3-phosphate-binding site is contributed by Thr13. Residue Arg17 coordinates ADP. Residues Arg83, Glu84, Tyr135, and Asp244 each coordinate sn-glycerol 3-phosphate. Glycerol-binding residues include Arg83, Glu84, Tyr135, Asp244, and Gln245. ADP is bound by residues Thr266 and Gly309. ATP-binding residues include Thr266, Gly309, Gln313, and Gly410. ADP contacts are provided by Gly410 and Asn414.

It belongs to the FGGY kinase family.

It carries out the reaction glycerol + ATP = sn-glycerol 3-phosphate + ADP + H(+). It functions in the pathway polyol metabolism; glycerol degradation via glycerol kinase pathway; sn-glycerol 3-phosphate from glycerol: step 1/1. Inhibited by fructose 1,6-bisphosphate (FBP). Key enzyme in the regulation of glycerol uptake and metabolism. Catalyzes the phosphorylation of glycerol to yield sn-glycerol 3-phosphate. The polypeptide is Glycerol kinase (Shewanella pealeana (strain ATCC 700345 / ANG-SQ1)).